Here is a 131-residue protein sequence, read N- to C-terminus: Small ribosomal subunit protein uS8 (131 aa).

Belongs to the universal ribosomal protein uS8 family. As to quaternary structure, part of the 30S ribosomal subunit. Contacts proteins S5 and S12.

Functionally, one of the primary rRNA binding proteins, it binds directly to 16S rRNA central domain where it helps coordinate assembly of the platform of the 30S subunit. In Chlorobium luteolum (strain DSM 273 / BCRC 81028 / 2530) (Pelodictyon luteolum), this protein is Small ribosomal subunit protein uS8.